The primary structure comprises 69 residues: uncharacterized protein (69 aa).

The first 21 residues, 1–21 (MNTKFILILLVLIISTIFVNS), serve as a signal peptide directing secretion.

The protein resides in the secreted. This is an uncharacterized protein from Dictyostelium discoideum (Social amoeba).